Here is a 508-residue protein sequence, read N- to C-terminus: UDP-N-acetylmuramoyl-L-alanyl-D-glutamate--2,6-diaminopimelate ligase (508 aa).

Residue serine 33 participates in UDP-N-acetyl-alpha-D-muramoyl-L-alanyl-D-glutamate binding. 121 to 127 (GTNGKST) lines the ATP pocket. Residues asparagine 162, 163–164 (TT), serine 190, glutamine 196, and arginine 198 contribute to the UDP-N-acetyl-alpha-D-muramoyl-L-alanyl-D-glutamate site. Lysine 230 carries the post-translational modification N6-carboxylysine. Residues arginine 399, 423-426 (DNPR), glycine 474, and glutamate 478 contribute to the meso-2,6-diaminopimelate site. Positions 423 to 426 (DNPR) match the Meso-diaminopimelate recognition motif motif.

Belongs to the MurCDEF family. MurE subfamily. Mg(2+) is required as a cofactor. Carboxylation is probably crucial for Mg(2+) binding and, consequently, for the gamma-phosphate positioning of ATP.

The protein localises to the cytoplasm. It catalyses the reaction UDP-N-acetyl-alpha-D-muramoyl-L-alanyl-D-glutamate + meso-2,6-diaminopimelate + ATP = UDP-N-acetyl-alpha-D-muramoyl-L-alanyl-gamma-D-glutamyl-meso-2,6-diaminopimelate + ADP + phosphate + H(+). It functions in the pathway cell wall biogenesis; peptidoglycan biosynthesis. Its function is as follows. Catalyzes the addition of meso-diaminopimelic acid to the nucleotide precursor UDP-N-acetylmuramoyl-L-alanyl-D-glutamate (UMAG) in the biosynthesis of bacterial cell-wall peptidoglycan. This Buchnera aphidicola subsp. Baizongia pistaciae (strain Bp) protein is UDP-N-acetylmuramoyl-L-alanyl-D-glutamate--2,6-diaminopimelate ligase.